We begin with the raw amino-acid sequence, 261 residues long: Cytochrome c oxidase subunit 3 (261 aa).

Over 1–15 (MTHQTHSYHMVNPSP) the chain is Mitochondrial matrix. The helical transmembrane segment at 16–34 (WPLTGALSALLMTSGLIMW) threads the bilayer. At 35–40 (FHFNSM) the chain is on the mitochondrial intermembrane side. Residues 41–66 (ILLTLGLSTNILTMYQWWRDIIREST) traverse the membrane as a helical segment. Residues 67 to 72 (FQGHHT) lie on the Mitochondrial matrix side of the membrane. The helical transmembrane segment at 73–105 (PTVQKGLRYGMILFIVSEVLFFTGFFWAFYHSS) threads the bilayer. The Mitochondrial intermembrane portion of the chain corresponds to 106 to 128 (LAPTPELGGCWPPTGIHPLNPLE). The helical transmembrane segment at 129–152 (VPLLNTSVLLASGVSITWAHHSLM) threads the bilayer. At 153–155 (EGN) the chain is on the mitochondrial matrix side. Residues 156–183 (RKHMLQALFITIALGLYFTLLQASEYYE) traverse the membrane as a helical segment. At 184–190 (APFTISD) the chain is on the mitochondrial intermembrane side. The helical transmembrane segment at 191–223 (GIYGSTFFVATGFHGLHVIIGSTFLIVCFLRQV) threads the bilayer. The Mitochondrial matrix portion of the chain corresponds to 224-232 (KFHFTSNHH). The chain crosses the membrane as a helical span at residues 233 to 256 (FGFERAAWYWHFVDVVWLFLYVSI). Over 257-261 (YWWGS) the chain is Mitochondrial intermembrane.

Belongs to the cytochrome c oxidase subunit 3 family. Component of the cytochrome c oxidase (complex IV, CIV), a multisubunit enzyme composed of 14 subunits. The complex is composed of a catalytic core of 3 subunits MT-CO1, MT-CO2 and MT-CO3, encoded in the mitochondrial DNA, and 11 supernumerary subunits COX4I, COX5A, COX5B, COX6A, COX6B, COX6C, COX7A, COX7B, COX7C, COX8 and NDUFA4, which are encoded in the nuclear genome. The complex exists as a monomer or a dimer and forms supercomplexes (SCs) in the inner mitochondrial membrane with NADH-ubiquinone oxidoreductase (complex I, CI) and ubiquinol-cytochrome c oxidoreductase (cytochrome b-c1 complex, complex III, CIII), resulting in different assemblies (supercomplex SCI(1)III(2)IV(1) and megacomplex MCI(2)III(2)IV(2)).

It is found in the mitochondrion inner membrane. It carries out the reaction 4 Fe(II)-[cytochrome c] + O2 + 8 H(+)(in) = 4 Fe(III)-[cytochrome c] + 2 H2O + 4 H(+)(out). Functionally, component of the cytochrome c oxidase, the last enzyme in the mitochondrial electron transport chain which drives oxidative phosphorylation. The respiratory chain contains 3 multisubunit complexes succinate dehydrogenase (complex II, CII), ubiquinol-cytochrome c oxidoreductase (cytochrome b-c1 complex, complex III, CIII) and cytochrome c oxidase (complex IV, CIV), that cooperate to transfer electrons derived from NADH and succinate to molecular oxygen, creating an electrochemical gradient over the inner membrane that drives transmembrane transport and the ATP synthase. Cytochrome c oxidase is the component of the respiratory chain that catalyzes the reduction of oxygen to water. Electrons originating from reduced cytochrome c in the intermembrane space (IMS) are transferred via the dinuclear copper A center (CU(A)) of subunit 2 and heme A of subunit 1 to the active site in subunit 1, a binuclear center (BNC) formed by heme A3 and copper B (CU(B)). The BNC reduces molecular oxygen to 2 water molecules using 4 electrons from cytochrome c in the IMS and 4 protons from the mitochondrial matrix. The sequence is that of Cytochrome c oxidase subunit 3 (MT-CO3) from Balaenoptera musculus (Blue whale).